The chain runs to 83 residues: uncharacterized protein (83 aa).

The signal sequence occupies residues 1 to 20; the sequence is MRRALTLAVLATCAVLPALA.

To P.denitrificans and M.extorquens MoxJ.

This is an uncharacterized protein from Paracoccus denitrificans.